The primary structure comprises 307 residues: Ribonuclease Z (307 aa).

The Zn(2+) site is built by H63, H65, D67, H68, H141, D208, and H266. The active-site Proton acceptor is D67.

This sequence belongs to the RNase Z family. As to quaternary structure, homodimer. It depends on Zn(2+) as a cofactor.

It catalyses the reaction Endonucleolytic cleavage of RNA, removing extra 3' nucleotides from tRNA precursor, generating 3' termini of tRNAs. A 3'-hydroxy group is left at the tRNA terminus and a 5'-phosphoryl group is left at the trailer molecule.. Zinc phosphodiesterase, which displays some tRNA 3'-processing endonuclease activity. Probably involved in tRNA maturation, by removing a 3'-trailer from precursor tRNA. The polypeptide is Ribonuclease Z (Chlamydia pneumoniae (Chlamydophila pneumoniae)).